Here is a 315-residue protein sequence, read N- to C-terminus: 4-carboxy-2-hydroxymuconate-6-semialdehyde dehydrogenase (315 aa).

This sequence belongs to the Gfo/Idh/MocA family. In terms of assembly, homodimer.

The catalysed reaction is 4-carboxy-2-hydroxymuconate semialdehyde hemiacetal + NADP(+) = 2-oxo-2H-pyran-4,6-dicarboxylate + NADPH + H(+). It functions in the pathway secondary metabolite metabolism; lignin degradation. With respect to regulation, inhibited by p-chloromercuribenzoate (10 mM), HgCl2 (10 mM), or 5,5-dithiobis(2-nitrobenzoate) (100 mM). In terms of biological role, involved in the degradation of protocatechuate (PCA) via the PCA 4,5-cleavage pathway. Catalyzes the oxidation of the hemiacetal form of 4-carboxy-2-hydroxymuconate-6-semialdehyde (CHMS) to produce 2-pyrone-4,6-dicarboxylate (PDC). LigC has 10-times-higher affinity to NADP than to NAD. This chain is 4-carboxy-2-hydroxymuconate-6-semialdehyde dehydrogenase (ligC), found in Sphingobium sp. (strain NBRC 103272 / SYK-6).